A 409-amino-acid polypeptide reads, in one-letter code: Arginine deiminase (409 aa).

Catalysis depends on Cys397, which acts as the Amidino-cysteine intermediate.

Belongs to the arginine deiminase family.

The protein localises to the cytoplasm. It carries out the reaction L-arginine + H2O = L-citrulline + NH4(+). The protein operates within amino-acid degradation; L-arginine degradation via ADI pathway; carbamoyl phosphate from L-arginine: step 1/2. The protein is Arginine deiminase (arcA) of Metamycoplasma hominis (Mycoplasma hominis).